A 460-amino-acid polypeptide reads, in one-letter code: Chromosomal replication initiator protein DnaA (460 aa).

The domain I, interacts with DnaA modulators stretch occupies residues 1–84 (MAVSLWQQCI…RFDIGSRPSA (84 aa)). The segment at 84-123 (AKKPEPAPVAAVRVPNPQTKASVGTSFNTTEPVANANHRS) is domain II. Residues 124–340 (NINPTYQFDN…GALNRVIANA (217 aa)) are domain III, AAA+ region. Residues Gly168, Gly170, Lys171, and Thr172 each coordinate ATP. The tract at residues 341–460 (NFTGRPITID…YANLIRTLSS (120 aa)) is domain IV, binds dsDNA.

It belongs to the DnaA family. As to quaternary structure, oligomerizes as a right-handed, spiral filament on DNA at oriC.

The protein localises to the cytoplasm. Functionally, plays an essential role in the initiation and regulation of chromosomal replication. ATP-DnaA binds to the origin of replication (oriC) to initiate formation of the DNA replication initiation complex once per cell cycle. Binds the DnaA box (a 9 base pair repeat at the origin) and separates the double-stranded (ds)DNA. Forms a right-handed helical filament on oriC DNA; dsDNA binds to the exterior of the filament while single-stranded (ss)DNA is stabiized in the filament's interior. The ATP-DnaA-oriC complex binds and stabilizes one strand of the AT-rich DNA unwinding element (DUE), permitting loading of DNA polymerase. After initiation quickly degrades to an ADP-DnaA complex that is not apt for DNA replication. Binds acidic phospholipids. The chain is Chromosomal replication initiator protein DnaA from Shewanella sp. (strain ANA-3).